The following is a 275-amino-acid chain: tRNA pseudouridine synthase A (275 aa).

Aspartate 56 acts as the Nucleophile in catalysis. Tyrosine 109 lines the substrate pocket.

It belongs to the tRNA pseudouridine synthase TruA family.

It carries out the reaction uridine(38/39/40) in tRNA = pseudouridine(38/39/40) in tRNA. In terms of biological role, formation of pseudouridine at positions 38, 39 and 40 in the anticodon stem and loop of transfer RNAs. The sequence is that of tRNA pseudouridine synthase A from Methanothermobacter thermautotrophicus (strain ATCC 29096 / DSM 1053 / JCM 10044 / NBRC 100330 / Delta H) (Methanobacterium thermoautotrophicum).